Reading from the N-terminus, the 249-residue chain is Acetylglutamate kinase (249 aa).

Substrate contacts are provided by residues 38-39 (GG), Arg-60, and Asn-147.

This sequence belongs to the acetylglutamate kinase family. ArgB subfamily.

It is found in the cytoplasm. The enzyme catalyses N-acetyl-L-glutamate + ATP = N-acetyl-L-glutamyl 5-phosphate + ADP. The protein operates within amino-acid biosynthesis; L-arginine biosynthesis; N(2)-acetyl-L-ornithine from L-glutamate: step 2/4. Catalyzes the ATP-dependent phosphorylation of N-acetyl-L-glutamate. The polypeptide is Acetylglutamate kinase (Deinococcus radiodurans (strain ATCC 13939 / DSM 20539 / JCM 16871 / CCUG 27074 / LMG 4051 / NBRC 15346 / NCIMB 9279 / VKM B-1422 / R1)).